The chain runs to 779 residues: Potassium/sodium hyperpolarization-activated cyclic nucleotide-gated channel 3 (779 aa).

The tract at residues 1 to 47 (MEEEARPAAGAGEAATPARETPPAAPAQARAASGGVPESAPEPKRRQ) is disordered. Residues 1–96 (MEEEARPAAG…PYSDFRFYWD (96 aa)) are Cytoplasmic-facing. Over residues 7 to 32 (PAAGAGEAATPARETPPAAPAQARAA) the composition is skewed to low complexity. Residues 45–90 (RRQLGTLLQPTVNKFSLRVFGSHKAVEIEQERVKSAGAWIIHPYSD) form an involved in subunit assembly region. A helical membrane pass occupies residues 97–117 (LIMLLLMVGNLIVLPVGITFF). At 118–123 (KEENSP) the chain is on the extracellular side. A helical membrane pass occupies residues 124–144 (PWIVFNVLSDTFFLLDLVLNF). Residues 145-170 (RTGIVVEEGAEILLAPRAIRTRYLRT) lie on the Cytoplasmic side of the membrane. The chain crosses the membrane as a helical span at residues 171-191 (WFLVDLISSIPVDYIFLVVEL). Over 192-200 (EPRLDAEVY) the chain is Extracellular. Residues 201-221 (KTARALRIVRFTKILSLLRLL) traverse the membrane as a helical; Voltage-sensor segment. Over 222 to 252 (RLSRLIRYIHQWEEIFHMTYDLASAVVRIFN) the chain is Cytoplasmic. Residues 253–273 (LIGMMLLLCHWDGCLQFLVPM) traverse the membrane as a helical segment. Topologically, residues 274–296 (LQDFPSDCWVSMNRMVNHSWGRQ) are extracellular. Asn-290 carries N-linked (GlcNAc...) asparagine glycosylation. An intramembrane region (pore-forming) is located at residues 297 to 318 (YSHALFKAMSHMLCIGYGQQAP). The Extracellular portion of the chain corresponds to 319–328 (VGMPDVWLTM). The helical transmembrane segment at 329–349 (LSMIVGATCYAMFIGHATALI) threads the bilayer. The Cytoplasmic segment spans residues 350–779 (QSLDSSRRQY…PRGPQISANM (430 aa)). The tract at residues 353–779 (DSSRRQYQEK…PRGPQISANM (427 aa)) is interaction with KCTD3. 3',5'-cyclic AMP-binding residues include Gly-491, Glu-492, Cys-494, Arg-501, Thr-502, Arg-542, and Arg-545. A disordered region spans residues 549 to 569 (KNSILQRKRSEPSPGSSGGVM). Ser-633 is modified (phosphoserine). The span at 687 to 697 (SLSRTGRSQVS) shows a compositional bias: polar residues. The segment at 687–779 (SLSRTGRSQV…PRGPQISANM (93 aa)) is disordered.

Belongs to the potassium channel HCN family. In terms of assembly, homotetramer. The potassium channel is composed of a homo- or heterotetrameric complex of pore-forming subunits. Interacts with HCN1. Interacts with KCTD3; this interaction increases cell surface expression and current density of this channel. Interacts with PEX5L. As to expression, detected in hypothalamus, amygdala, olfactory bulb, hippocampus and retina (at protein level). Highly expressed in brain and heart, in particular in ventricle, atrium and in sinoatrial node (SAN). Detected at low levels in skeletal muscle and lung. Expressed in DRG neurons.

It is found in the cell membrane. It carries out the reaction K(+)(in) = K(+)(out). It catalyses the reaction Na(+)(in) = Na(+)(out). With respect to regulation, unlike HCN2 and HCN4, HCN3 is insensitive to cyclic nucleotides, such as cAMP or cGMP. This lack of sensitivity of HCN3, despite harboring a functional cyclic nucleotide-binding domain (CNBD), may be explained by its shorter C-terminal sequence, which may alter the normal autoinhibition of the channel. Inhibited by Cs(1+) and ivabradine. Phosphatidylinositol-4,5-bisphosphate (PIP(2)) shifts HCN3 activation to more depolarized potentials and accelerated activation kinetics. Hyperpolarization-activated ion channel that are permeable to sodium and potassium ions, with an about 3:1 preference for potassium ions. Contributes to the native pacemaker currents in heart (If) and in neurons (Ih). In particular, plays a pivotal role in maintaining excitability and promoting rhythmic burst firing within hypothalamic nuclei. Exerts a significant influence on the configuration of the cardiac action potential waveform. Does not appear to play a prominent role in the processing of acute, neuropathic, or inflammatory pain. In Mus musculus (Mouse), this protein is Potassium/sodium hyperpolarization-activated cyclic nucleotide-gated channel 3 (Hcn3).